We begin with the raw amino-acid sequence, 302 residues long: Sulfate adenylyltransferase subunit 2 (302 aa).

The protein belongs to the PAPS reductase family. CysD subfamily. In terms of assembly, heterodimer composed of CysD, the smaller subunit, and CysN.

The enzyme catalyses sulfate + ATP + H(+) = adenosine 5'-phosphosulfate + diphosphate. It functions in the pathway sulfur metabolism; hydrogen sulfide biosynthesis; sulfite from sulfate: step 1/3. Functionally, with CysN forms the ATP sulfurylase (ATPS) that catalyzes the adenylation of sulfate producing adenosine 5'-phosphosulfate (APS) and diphosphate, the first enzymatic step in sulfur assimilation pathway. APS synthesis involves the formation of a high-energy phosphoric-sulfuric acid anhydride bond driven by GTP hydrolysis by CysN coupled to ATP hydrolysis by CysD. The polypeptide is Sulfate adenylyltransferase subunit 2 (Escherichia coli O157:H7 (strain EC4115 / EHEC)).